Reading from the N-terminus, the 64-residue chain is Large ribosomal subunit protein bL35 (64 aa).

Over residues 1 to 24 the composition is skewed to basic residues; that stretch reads MPKMKSHRGACKRFKKTASGKVKR. The interval 1–64 is disordered; it reads MPKMKSHRGA…EKQIKRMILA (64 aa). Residues 25 to 35 are compositionally biased toward basic and acidic residues; the sequence is ERMYGSHNLEK. Positions 36-45 are enriched in basic residues; that stretch reads KNRKRTRRLH.

This sequence belongs to the bacterial ribosomal protein bL35 family.

The sequence is that of Large ribosomal subunit protein bL35 from Prosthecochloris aestuarii (strain DSM 271 / SK 413).